Consider the following 61-residue polypeptide: Photosystem II assembly protein Psb34 (61 aa).

A helical membrane pass occupies residues 36–56 (LIMAAITVVLVAGLIAVAVVA).

It belongs to the Psb34 family. In terms of assembly, part of the photosystem II (PSII) assembly intermediate RC47 complex (with D1, D2, CP47, PsbE, PsbF, PsbH, Psb27 and Psb28); minor amounts are found in other PSII complexes, including mature, dimeric PSII with PsbO and PsbV. No HliA or HliB are detected in any of these complexes. Its interaction with PSII requires both CP47 (psbB) and PsbH. HliA/HliB and Psb34 probably bind to a similar site on CP47; their binding seems to be mutually exclusive.

Its subcellular location is the cellular thylakoid membrane. In terms of biological role, involved in photosystem II (PSII) assembly and/or repair. Probably involved in conversion of late PSII assembly intermediates into mature dimeric PSII, it may mediate the optimal equlibrium of HliA/HliB among the intermediates containing CP47 (psbB) to facilitate photoprotection during assembly. The chain is Photosystem II assembly protein Psb34 from Synechocystis sp. (strain ATCC 27184 / PCC 6803 / Kazusa).